Reading from the N-terminus, the 52-residue chain is Metallothionein-2 (52 aa).

2 repeats span residues 43-47 and 48-52; these read QTCKC.

It belongs to the metallothionein superfamily. Type 10 family.

Its function is as follows. The metallothioneins are involved in the cellular sequestration of toxic metal ions. The protein is Metallothionein-2 (MT-II) of Candida glabrata (strain ATCC 2001 / BCRC 20586 / JCM 3761 / NBRC 0622 / NRRL Y-65 / CBS 138) (Yeast).